The sequence spans 284 residues: Homoserine O-acetyltransferase 2 (284 aa).

Catalysis depends on Cys-133, which acts as the Acyl-thioester intermediate. The substrate site is built by Lys-154 and Ser-178. The active-site Proton acceptor is the His-220. Residue Glu-222 is part of the active site. Arg-234 contributes to the substrate binding site.

It belongs to the MetA family.

Its subcellular location is the cytoplasm. It carries out the reaction L-homoserine + acetyl-CoA = O-acetyl-L-homoserine + CoA. It functions in the pathway amino-acid biosynthesis; L-methionine biosynthesis via de novo pathway; O-acetyl-L-homoserine from L-homoserine: step 1/1. In terms of biological role, transfers an acetyl group from acetyl-CoA to L-homoserine, forming acetyl-L-homoserine. This chain is Homoserine O-acetyltransferase 2, found in Ilyobacter polytropus (strain ATCC 51220 / DSM 2926 / LMG 16218 / CuHBu1).